Reading from the N-terminus, the 197-residue chain is Carnitine operon protein CaiE (197 aa).

The segment at 177 to 197 (TAPEANRPRLRGTTEVKPKGQ) is disordered. Residues 188–197 (GTTEVKPKGQ) show a composition bias toward basic and acidic residues.

It belongs to the transferase hexapeptide repeat family.

Its pathway is amine and polyamine metabolism; carnitine metabolism. In terms of biological role, overproduction of CaiE stimulates the activity of CaiB and CaiD. The polypeptide is Carnitine operon protein CaiE (Proteus sp. (strain LE138)).